Here is a 140-residue protein sequence, read N- to C-terminus: uncharacterized protein (140 aa).

This is an uncharacterized protein from Acidianus ambivalens (Desulfurolobus ambivalens).